We begin with the raw amino-acid sequence, 329 residues long: Phenylalanine--tRNA ligase alpha subunit (329 aa).

A Mg(2+)-binding site is contributed by Glu253.

Belongs to the class-II aminoacyl-tRNA synthetase family. Phe-tRNA synthetase alpha subunit type 1 subfamily. As to quaternary structure, tetramer of two alpha and two beta subunits. Requires Mg(2+) as cofactor.

Its subcellular location is the cytoplasm. The enzyme catalyses tRNA(Phe) + L-phenylalanine + ATP = L-phenylalanyl-tRNA(Phe) + AMP + diphosphate + H(+). The chain is Phenylalanine--tRNA ligase alpha subunit from Teredinibacter turnerae (strain ATCC 39867 / T7901).